We begin with the raw amino-acid sequence, 334 residues long: MTRVLAIETSCDETAAAVVEDGRRALSDVVSTQIDIHRRWGGVVPELASRNHVVQVMPVVDEALTRSGVGPEGLDAVAVTSGPGLVGALLVGVQAAKALALAWGKPLVGVNHLEGHLVAAFLAEVPPAFPYLGLVVSGGHTSLYAAHGFGDYRLLGQTRDDAAGEAFDKGAKLLGLPYPGGVAIDRLAKEGDPAAIRFPKAIVKGADLDFSFSGLKTALLHHVKKHGVPEGPALADLCASYQEAIVRALVEKAFRAARRLQFERLVLAGGVAANSRLRAAATARAAEYEGMSVFIPPVRLCTDNAAMIAVAGTHALLRGERAGPDLNADPAWRL.

Fe cation contacts are provided by His112 and His116. Substrate contacts are provided by residues 135 to 139 (VVSGG), Asp168, Gly181, Asp185, and Asn274. Asp303 serves as a coordination point for Fe cation.

It belongs to the KAE1 / TsaD family. Fe(2+) serves as cofactor.

Its subcellular location is the cytoplasm. It carries out the reaction L-threonylcarbamoyladenylate + adenosine(37) in tRNA = N(6)-L-threonylcarbamoyladenosine(37) in tRNA + AMP + H(+). Functionally, required for the formation of a threonylcarbamoyl group on adenosine at position 37 (t(6)A37) in tRNAs that read codons beginning with adenine. Is involved in the transfer of the threonylcarbamoyl moiety of threonylcarbamoyl-AMP (TC-AMP) to the N6 group of A37, together with TsaE and TsaB. TsaD likely plays a direct catalytic role in this reaction. This is tRNA N6-adenosine threonylcarbamoyltransferase from Anaeromyxobacter dehalogenans (strain 2CP-C).